A 60-amino-acid chain; its full sequence is Potassium channel toxin alpha-KTx 15.9 (60 aa).

The first 22 residues, 1–22, serve as a signal peptide directing secretion; sequence MKIFLPVLVMLILCSMCLLTEG. 3 cysteine pairs are disulfide-bonded: Cys-30/Cys-51, Cys-36/Cys-56, and Cys-40/Cys-58.

This sequence belongs to the short scorpion toxin superfamily. Potassium channel inhibitor family. Alpha-KTx 15 subfamily. Expressed by the venom gland.

The protein resides in the secreted. Its function is as follows. Blocker of A-type voltage-gated potassium channels of cerebellar granular cells. May also inhibit Kv4/KCND when coexpressed with DPP6 or DPP10. The occlusion of the outer entry of the K(+) conducting pore is partially reversible and affects both open and closed channels. It shares the same target in rat brain than BmTX3 (AC Q8I0L5) and AmmTX3 (AC P60208). Has been shown to weakly inhibit TRPV1 channels. This chain is Potassium channel toxin alpha-KTx 15.9, found in Lychas mucronatus (Chinese swimming scorpion).